The sequence spans 418 residues: Metacaspase-4 (418 aa).

Active-site residues include H86 and C139. C139 is modified (S-nitrosocysteine). The interval 153–172 (GESTKKEAEDEDESEESSSR) is disordered.

This sequence belongs to the peptidase C14B family. Post-translationally, the two subunits are derived from the precursor sequence by an autocatalytic mechanism. Expressed in roots, cotyledons, leaves, cauline leaves, pollen and embryos.

The protein localises to the cytoplasm. It is found in the cytosol. With respect to regulation, activated by Ca(2+) which induces self-processing and accelerates the rate of the enzyme activity, but has no effect on Km. Cysteine protease that cleaves specifically after arginine or lysine residues. Does not cleave caspase-specific substrates. Plays a positive regulatory role in biotic and abiotic stress-induced programmed cell death. This Arabidopsis thaliana (Mouse-ear cress) protein is Metacaspase-4 (AMC4).